Consider the following 355-residue polypeptide: Enhancer of mRNA-decapping protein 1 (355 aa).

Disordered regions lie at residues 1–146 (MSSD…VDGM), 210–230 (MSQPMSQPMSQPMSQPMSQPM), and 301–330 (NSTAKASVRSKGSPGSEGGSRRSQNWKSSQ). The segment covering 39-49 (AQKQQLPNGEQ) has biased composition (polar residues). Residues 57 to 67 (KQSRKRGSGRQ) show a composition bias toward basic residues. Residues 91-110 (SIPSGSAGSESAQKETSAGQ) show a composition bias toward polar residues. Over residues 123-142 (VPAGGPAGKSSSEPASASSA) the composition is skewed to low complexity.

It belongs to the EDC family.

Its subcellular location is the cytoplasm. Its function is as follows. mRNA-binding protein which stimulates mRNA decapping. The protein is Enhancer of mRNA-decapping protein 1 (EDC1) of Eremothecium gossypii (strain ATCC 10895 / CBS 109.51 / FGSC 9923 / NRRL Y-1056) (Yeast).